We begin with the raw amino-acid sequence, 488 residues long: Receptor-like tyrosine-protein kinase kin-15 (488 aa).

The first 26 residues, Met-1 to Ser-26, serve as a signal peptide directing secretion. An N-linked (GlcNAc...) asparagine glycan is attached at Asn-25. At Thr-27–Met-50 the chain is on the extracellular side. A helical membrane pass occupies residues Phe-51–Leu-70. Over Ser-71 to Asp-488 the chain is Cytoplasmic. The Protein kinase domain occupies Glu-144 to Val-458. ATP contacts are provided by residues Leu-150–Val-158 and Lys-183. The active-site Proton acceptor is the Asp-319.

The protein belongs to the protein kinase superfamily. Tyr protein kinase family. Hypodermal cells.

It localises to the cell membrane. The catalysed reaction is L-tyrosyl-[protein] + ATP = O-phospho-L-tyrosyl-[protein] + ADP + H(+). May be specifically involved in cell-cell interactions regulating cell fusions that generate the hypodermis during postembryonic development. It has a role in the development of the HYP7 hypodermal syncytium. The sequence is that of Receptor-like tyrosine-protein kinase kin-15 (kin-15) from Caenorhabditis elegans.